The sequence spans 239 residues: Fatty acid metabolism regulator protein (239 aa).

In terms of domain architecture, HTH gntR-type spans 6–74; sequence QSPAGFAEEY…HGKPTKVNNF (69 aa). The segment at residues 34–53 is a DNA-binding region (H-T-H motif); sequence ERELSELIGVTRTTLREVLQ.

As to quaternary structure, homodimer.

The protein resides in the cytoplasm. In terms of biological role, multifunctional regulator of fatty acid metabolism. The chain is Fatty acid metabolism regulator protein from Enterobacter sp. (strain 638).